The following is a 75-amino-acid chain: MKTEIHPNYHSITVVMTDGTEYQTRSTWGKEGDKLNLDIDPRSHPAWTGGTQQVLDRGGRVSRFQKKFSGFLKKD.

The protein belongs to the bacterial ribosomal protein bL31 family. Type A subfamily. Part of the 50S ribosomal subunit.

Its function is as follows. Binds the 23S rRNA. The protein is Large ribosomal subunit protein bL31 of Rhodopseudomonas palustris (strain BisB5).